Consider the following 1076-residue polypeptide: Structural maintenance of chromosomes protein 5 (1076 aa).

ATP is bound at residue 49–56 (GHNGSGKS). The stretch at 190–415 (STSIEDKCTT…KRDEEQNSQL (226 aa)) forms a coiled coil. Residues 375–410 (EQKYSTAERDSRQEEDAIQKKSYEMRQLENKKRDEE) are compositionally biased toward basic and acidic residues. Residues 375–420 (EQKYSTAERDSRQEEDAIQKKSYEMRQLENKKRDEEQNSQLNRQDR) form a disordered region. The tract at residues 416–617 (NRQDRYRVLQ…ANTWRDQFFK (202 aa)) is flexible hinge. Coiled coils occupy residues 627–713 (NSIL…EKKA) and 749–786 (KSRVNKSNSEAETHRSKLEDLKSVKDAAEDLLKTALNH).

Belongs to the SMC family. SMC5 subfamily. In terms of assembly, interacts with smc-6. In terms of tissue distribution, expressed in the germline (at protein level).

It is found in the nucleus. It localises to the chromosome. Functionally, core component of the smc-5/smc-6 complex. Functions in DNA double strand break repair by promoting sister-chromatid homologous recombination during meiosis. Acts in a DNA repair pathway for removal of ionizing radiation- and ultraviolet (UV) radiation-induced DNA lesions that is distinct from classical nucleotide excision repair and the translesion synthesis pathway. Also involved in the recovery of stalled replication forks. The polypeptide is Structural maintenance of chromosomes protein 5 (Caenorhabditis elegans).